Consider the following 361-residue polypeptide: Queuine tRNA-ribosyltransferase (361 aa).

Residue aspartate 92 is the Proton acceptor of the active site. Residues 92-96, aspartate 146, glutamine 189, and glycine 216 contribute to the substrate site; that span reads DSGGF. The interval 247–253 is RNA binding; it reads GVGKPSD. The active-site Nucleophile is the aspartate 266. Positions 271–275 are RNA binding; important for wobble base 34 recognition; sequence TRSGR. Residues cysteine 304, cysteine 306, cysteine 309, and histidine 335 each coordinate Zn(2+).

The protein belongs to the queuine tRNA-ribosyltransferase family. Homodimer. Within each dimer, one monomer is responsible for RNA recognition and catalysis, while the other monomer binds to the replacement base PreQ1. Zn(2+) serves as cofactor.

The catalysed reaction is 7-aminomethyl-7-carbaguanine + guanosine(34) in tRNA = 7-aminomethyl-7-carbaguanosine(34) in tRNA + guanine. The protein operates within tRNA modification; tRNA-queuosine biosynthesis. In terms of biological role, catalyzes the base-exchange of a guanine (G) residue with the queuine precursor 7-aminomethyl-7-deazaguanine (PreQ1) at position 34 (anticodon wobble position) in tRNAs with GU(N) anticodons (tRNA-Asp, -Asn, -His and -Tyr). Catalysis occurs through a double-displacement mechanism. The nucleophile active site attacks the C1' of nucleotide 34 to detach the guanine base from the RNA, forming a covalent enzyme-RNA intermediate. The proton acceptor active site deprotonates the incoming PreQ1, allowing a nucleophilic attack on the C1' of the ribose to form the product. After dissociation, two additional enzymatic reactions on the tRNA convert PreQ1 to queuine (Q), resulting in the hypermodified nucleoside queuosine (7-(((4,5-cis-dihydroxy-2-cyclopenten-1-yl)amino)methyl)-7-deazaguanosine). This Rickettsia prowazekii (strain Madrid E) protein is Queuine tRNA-ribosyltransferase.